Consider the following 90-residue polypeptide: UPF0297 protein lmo1503 (90 aa).

It belongs to the UPF0297 family.

This chain is UPF0297 protein lmo1503, found in Listeria monocytogenes serovar 1/2a (strain ATCC BAA-679 / EGD-e).